A 444-amino-acid polypeptide reads, in one-letter code: Lycopaoctaene synthase (444 aa).

Arg48 and Arg73 together coordinate NADP(+). Mg(2+) contacts are provided by Asp76, Glu79, and Asp80. Positions 215, 315, and 317 each coordinate NADP(+). 2 helical membrane passes run 391 to 411 (TAMV…AYVY) and 415 to 435 (GTSL…IGLF).

It belongs to the phytoene/squalene synthase family. Mg(2+) serves as cofactor.

It localises to the membrane. The enzyme catalyses 2 (2E,6E)-farnesyl diphosphate + NADH + H(+) = squalene + 2 diphosphate + NAD(+). It carries out the reaction 2 (2E,6E)-farnesyl diphosphate + NADPH + H(+) = squalene + 2 diphosphate + NADP(+). The catalysed reaction is 2 (2E,6E,10E)-geranylgeranyl diphosphate + NADPH + H(+) = all-trans-lycopaoctaene + 2 diphosphate + NADP(+). In terms of biological role, converts the C20 geranylgeranyl diphosphate (GGPP) to the C40 lycopaoctaene, the first committed intermediate in the production of lycopadiene. Converts farnesyl diphosphate (FPP) into squalene, a precursor for sterol biosynthesis in eukaryotes. Converts with low efficiency the C20 phytyl diphosphate (PPP) to the C40 lycopadiene in vitro. This reaction may not have biological significance in vivo. This Botryococcus braunii (Green alga) protein is Lycopaoctaene synthase.